Here is a 159-residue protein sequence, read N- to C-terminus: Adult-specific rigid cuticular protein 15.7 (159 aa).

The region spanning 23–89 is the Chitin-binding type R&amp;R domain; the sequence is LGNYAFNYGI…SIKTNEPGTA (67 aa).

Component of the rigid cuticle of the spider. This is Adult-specific rigid cuticular protein 15.7 from Araneus diadematus (European garden spider).